Reading from the N-terminus, the 981-residue chain is MAEGGAADLDTQRSDIATLLKTSLRKGDTWYLVDSRWFKQWKKYVGFDSWDKYQMGDQNVYPGPIDNSGLLKDGDAQSLKEHLIDELDYILLPTEGWNKLVSWYTLMEGQEPIARKVVEQGMFVKHCKVEVYLTELKLCENGNMNNVVTRRFSKADTIDTIEKEIRKIFSIPDEKETRLWNKYMSNTFEPLNKPDSTIQDAGLYQGQVLVIEQKNEDGTWPRGPSTPKSPGASNFSTLPKISPSSLSNNYNNMNNRNVKNSNYCLPSYTAYKNYDYSEPGRNNEQPGLCGLSNLGNTCFMNSAIQCLSNTPPLTEYFLNDKYQEELNFDNPLGMRGEIAKSYAELIKQMWSGKFSYVTPRAFKTQVGRFAPQFSGYQQQDCQELLAFLLDGLHEDLNRIRKKPYIQLKDADGRPDKVVAEEAWENHLKRNDSIIVDIFHGLFKSTLVCPECAKISVTFDPFCYLTLPLPMKKERTLEVYLVRMDPLTKPMQYKVVVPKIGNILDLCTALSALSGIPADKMIVTDIYNHRFHRIFAMDENLSSIMERDDIYVFEININRTEDTEHVIIPVCLREKFRHSSYTHHTGSSLFGQPFLMAVPRNNTEDKLYNLLLLRMCRYVKISTETEETEGSLHCCKDQNINGNGPNGIHEEGSPSEMETDEPDDESSQDQELPSENENSQSEDSVGGDNDSENGLCTEDTCKGQLTGHKKRLFTFQFNNLGNTDINYIKDDTRHIRFDDRQLRLDERSFLALDWDPDLKKRYFDENAAEDFEKHESVEYKPPKKPFVKLKDCIELFTTKEKLGAEDPWYCPNCKEHQQATKKLDLWSLPPVLVVHLKRFSYSRYMRDKLDTLVDFPINDLDMSEFLINPNAGPCRYNLIAVSNHYGGMGGGHYTAFAKNKDDGKWYYFDDSSVSTASEDQIVSKAAYVLFYQRQDTFSGTGFFPLDRETKGASAATGIPLESDEDSNDNDNDIENENCMHTN.

Position 2 is an N-acetylalanine (alanine 2). The tract at residues 2 to 223 is mediates interaction with SART3; it reads AEGGAADLDT…KNEDGTWPRG (222 aa). Residues 7 to 118 enclose the DUSP domain; that stretch reads ADLDTQRSDI…GQEPIARKVV (112 aa). The interval 216–237 is disordered; sequence EDGTWPRGPSTPKSPGASNFST. At threonine 226 the chain carries Phosphothreonine. The segment covering 226-237 has biased composition (polar residues); sequence TPKSPGASNFST. Phosphoserine is present on residues serine 229 and serine 242. The 645-residue stretch at 289-933 folds into the USP domain; the sequence is CGLSNLGNTC…AAYVLFYQRQ (645 aa). Cysteine 298 acts as the Nucleophile in catalysis. Threonine 602 is modified (phosphothreonine). Residues 629-694 form a disordered region; sequence GSLHCCKDQN…GGDNDSENGL (66 aa). Over residues 656–673 the composition is skewed to acidic residues; it reads METDEPDDESSQDQELPS. Residue histidine 891 is the Proton acceptor of the active site. Positions 952-981 are disordered; the sequence is SAATGIPLESDEDSNDNDNDIENENCMHTN. Residues 960 to 974 are compositionally biased toward acidic residues; that stretch reads ESDEDSNDNDNDIEN. Phosphoserine occurs at positions 961 and 965.

Belongs to the peptidase C19 family. As to quaternary structure, a homodimer structure has been reported; however it is unclear whether the protein form a homodimer in vivo. Identified in a complex with the COP9 signalosome complex (CSN). Interacts with SMAD1, SMAD2 and SMAD3; the interaction is direct. Forms a complex with SMURF2 and SMAD7. Interacts with TGFBR1. Interacts with SART3; the interaction is direct. May interact with RNF20 and RNF40. May interact with PRKN. Interacts with INCA1. (Microbial infection) Interacts with human papillomavirus type 16 protein E6. In terms of processing, phosphorylated. Phosphorylation protects against ubiquitination and subsequent degradation by the proteasome. Post-translationally, ubiquitinated, leading to degradation by the proteasome. In terms of tissue distribution, expressed in skeletal muscle, kidney, heart, placenta, liver, thymus, lung, and ovary, with little or no expression in other tissues.

Its subcellular location is the cytoplasm. It localises to the nucleus. The protein localises to the mitochondrion. It catalyses the reaction Thiol-dependent hydrolysis of ester, thioester, amide, peptide and isopeptide bonds formed by the C-terminal Gly of ubiquitin (a 76-residue protein attached to proteins as an intracellular targeting signal).. Hydrolase that removes conjugated ubiquitin from target proteins and regulates various pathways such as the TGF-beta receptor signaling, NF-kappa-B and RNF41/NRDP1-PRKN pathways. Acts as a key regulator of TGF-beta receptor signaling pathway, but the precise mechanism is still unclear: according to a report, acts by promoting deubiquitination of monoubiquitinated R-SMADs (SMAD1, SMAD2 and/or SMAD3), thereby alleviating inhibition of R-SMADs and promoting activation of TGF-beta target genes. According to another reports, regulates the TGF-beta receptor signaling pathway by mediating deubiquitination and stabilization of TGFBR1, leading to an enhanced TGF-beta signal. Able to mediate deubiquitination of monoubiquitinated substrates, 'Lys-27'-, 'Lys-48'- and 'Lys-63'-linked polyubiquitin chains. May also regulate gene expression and/or DNA repair through the deubiquitination of histone H2B. Acts as an inhibitor of mitophagy by counteracting the action of parkin (PRKN): hydrolyzes cleavage of 'Lys-48'- and 'Lys-63'-linked polyubiquitin chains attached by parkin on target proteins such as MFN2, thereby reducing parkin's ability to drive mitophagy. Acts as an associated component of COP9 signalosome complex (CSN) and regulates different pathways via this association: regulates NF-kappa-B by mediating deubiquitination of NFKBIA and deubiquitinates substrates bound to VCP. Involved in endosome organization by mediating deubiquitination of SQSTM1: ubiquitinated SQSTM1 forms a molecular bridge that restrains cognate vesicles in the perinuclear region and its deubiquitination releases target vesicles for fast transport into the cell periphery. Acts as a negative regulator of antifungal immunity by mediating 'Lys-27'-linked deubiquitination of CARD9, thereby inactivating CARD9. Its function is as follows. (Microbial infection) Protects APC and human papillomavirus type 16 protein E6 against degradation via the ubiquitin proteasome pathway. This chain is Ubiquitin carboxyl-terminal hydrolase 15, found in Homo sapiens (Human).